The chain runs to 840 residues: E3 ubiquitin-protein ligase RNF19A (840 aa).

The interval 40-61 is disordered; the sequence is SDRDLQSSTSSVSLPSVKKAPK. Residues 45-56 are compositionally biased toward low complexity; that stretch reads QSSTSSVSLPSV. Positions 128-351 are TRIAD supradomain; sequence DFIECPLCLL…LSPSGCTFWG (224 aa). Zn(2+)-binding residues include cysteine 132, cysteine 135, cysteine 150, histidine 152, cysteine 155, cysteine 158, cysteine 176, cysteine 179, cysteine 219, cysteine 224, cysteine 241, cysteine 246, cysteine 251, cysteine 254, histidine 259, cysteine 264, cysteine 301, and cysteine 304. The segment at 132-179 adopts an RING-type 1 zinc-finger fold; it reads CPLCLLRHSKDRFPDIMTCHHRSCVDCLRQYLRIEISESRVNISCPEC. Residues 199–264 form an IBR-type zinc finger; it reads EKYEEFMLRR…KQIWHPNQTC (66 aa). An RING-type 2; atypical zinc finger spans residues 301–332; that stretch reads CPRCAAYIIKMNDGSCNHMTCAVCGCEFCWLC. Cysteine 316 is an active-site residue. Positions 321, 324, 329, 332, 340, and 347 each coordinate Zn(2+). The next 2 helical transmembrane spans lie at 368–388 and 424–444; these read LVGAPVGIALIAGIAIPAMII and VIVSPVVAAVTVGIGVPIMLA. 3 disordered regions span residues 625–685, 700–721, and 786–808; these read FKFR…GNMK, QQSTNSSEFEAPSLSDSMPSVA, and CSDVPQPSHAADEHGTSRSGGKP. Residue serine 631 is modified to Phosphoserine. Residues 660 to 840 form an interaction with CASR region; the sequence is ATKWSKEATG…DLKVAVQTEI (181 aa). Positions 671–683 are enriched in basic residues; sequence KKSKSGKLRKKGN. Over residues 700 to 717 the composition is skewed to polar residues; the sequence is QQSTNSSEFEAPSLSDSM.

This sequence belongs to the RBR family. RNF19 subfamily. Interacts with UBE2L3 and UBE2L6. Also interacts with transcription factor Sp1. Interacts with SNCAIP and CASR. Interacts with VCP.

It is found in the membrane. It localises to the cytoplasm. The protein resides in the cytoskeleton. The protein localises to the microtubule organizing center. Its subcellular location is the centrosome. The enzyme catalyses [E2 ubiquitin-conjugating enzyme]-S-ubiquitinyl-L-cysteine + [acceptor protein]-L-lysine = [E2 ubiquitin-conjugating enzyme]-L-cysteine + [acceptor protein]-N(6)-ubiquitinyl-L-lysine.. Its pathway is protein modification; protein ubiquitination. Functionally, E3 ubiquitin-protein ligase which accepts ubiquitin from E2 ubiquitin-conjugating enzymes UBE2L3 and UBE2L6 in the form of a thioester and then directly transfers the ubiquitin to targeted substrates, such as SNCAIP or CASR. This chain is E3 ubiquitin-protein ligase RNF19A (Rnf19a), found in Mus musculus (Mouse).